The following is an 802-amino-acid chain: LPS-assembly protein LptD (802 aa).

The first 25 residues, 1–25, serve as a signal peptide directing secretion; the sequence is MARLFSLKPLVLALGLCFGTHCAAA.

This sequence belongs to the LptD family. Component of the lipopolysaccharide transport and assembly complex. Interacts with LptE and LptA.

It localises to the cell outer membrane. Functionally, together with LptE, is involved in the assembly of lipopolysaccharide (LPS) at the surface of the outer membrane. This Neisseria meningitidis serogroup B (strain ATCC BAA-335 / MC58) protein is LPS-assembly protein LptD.